Here is a 310-residue protein sequence, read N- to C-terminus: Homocysteine S-methyltransferase (310 aa).

Residues 1–310 (MSQNNPLRAL…ADIAALKARS (310 aa)) enclose the Hcy-binding domain. Residues C229, C295, and C296 each contribute to the Zn(2+) site.

Monomer. Zn(2+) is required as a cofactor.

It carries out the reaction S-methyl-L-methionine + L-homocysteine = 2 L-methionine + H(+). Its function is as follows. Catalyzes methyl transfer from S-methylmethionine or S-adenosylmethionine (less efficient) to homocysteine, selenohomocysteine and less efficiently selenocysteine. This is Homocysteine S-methyltransferase (mmuM) from Escherichia coli (strain K12).